The sequence spans 580 residues: Frizzled-10-B (580 aa).

The N-terminal stretch at 1 to 20 is a signal peptide; the sequence is MEPRVVTALLLSLAAALCSG. Over 21-224 the chain is Extracellular; it reads ISSINPDRSG…DVYWSKNDKK (204 aa). The FZ domain maps to 29–150; the sequence is SGEGRCQAIE…NDPNYLCMEA (122 aa). 5 disulfides stabilise this stretch: C34/C95, C42/C88, C79/C117, C106/C147, and C110/C134. The N-linked (GlcNAc...) asparagine glycan is linked to N48. A glycan (N-linked (GlcNAc...) asparagine) is linked at N153. Residues 173–194 form a disordered region; the sequence is RPNSGHEMYPKDPKGRSSCENS. The span at 180–189 shows a compositional bias: basic and acidic residues; sequence MYPKDPKGRS. A helical membrane pass occupies residues 225-245; sequence FAFIWIAIWSLLCFFSSAFTV. Over 246–261 the chain is Cytoplasmic; it reads LTFLVDPLRFKYPERP. A helical transmembrane segment spans residues 262 to 282; that stretch reads IIFLSMCYCVYSVGYIIRLFA. Residues 283–309 are Extracellular-facing; the sequence is GADSIACDRDSGQLYVIQEGLESTGCT. The chain crosses the membrane as a helical span at residues 310 to 330; it reads IVFLILYYFGMASSLWWVILT. Residues 331–350 are Cytoplasmic-facing; it reads LTWFLAAGKKWGHEAIEANS. The chain crosses the membrane as a helical span at residues 351–371; that stretch reads SYFHLAAWAIPAVKTIMILVM. At 372–392 the chain is on the extracellular side; that stretch reads RRVAGDELTGVCYVGSMDVNA. A helical transmembrane segment spans residues 393-413; it reads LTGFVLIPLACYLIIGTSFIL. Residues 414–442 lie on the Cytoplasmic side of the membrane; the sequence is SGFVALFHIRRVMKTGGENTDKLEKLMVR. The chain crosses the membrane as a helical span at residues 443 to 463; that stretch reads IGVFSVLYTVPATCVIACYFY. Topologically, residues 464-501 are extracellular; that stretch reads ERLNMDFWKILATQDKCKMDSQTKTLDCTMTSSIPAVE. Residues 502–522 form a helical membrane-spanning segment; that stretch reads IFMVKIFMLLVVGITSGMWIW. The Cytoplasmic portion of the chain corresponds to 523–580; the sequence is TSKTVQSWQNVFSKSLKKRNRNKPASVITSAGIYKKPQQPPKIHHGKYESALRSPTCV. The short motif at 525–530 is the Lys-Thr-X-X-X-Trp motif, mediates interaction with the PDZ domain of Dvl family members element; the sequence is KTVQSW. Positions 558 to 580 are disordered; the sequence is KPQQPPKIHHGKYESALRSPTCV. Positions 578–580 match the PDZ-binding motif; the sequence is TCV.

Belongs to the G-protein coupled receptor Fz/Smo family. In terms of tissue distribution, expressed in liver, lung, brain, testis, heart and ovary.

It is found in the cell membrane. Functionally, receptor for Wnt proteins. Most of frizzled receptors are coupled to the beta-catenin canonical signaling pathway, which leads to the activation of disheveled proteins, inhibition of GSK-3 kinase, nuclear accumulation of beta-catenin and activation of Wnt target genes. A second signaling pathway involving PKC and calcium fluxes has been seen for some family members, but it is not yet clear if it represents a distinct pathway or if it can be integrated in the canonical pathway, as PKC seems to be required for Wnt-mediated inactivation of GSK-3 kinase. Both pathways seem to involve interactions with G-proteins. May be involved in transduction and intercellular transmission of polarity information during tissue morphogenesis and/or in differentiated tissues. Activated by Wnt8. Could have an antagonizing activity in the morphogenesis during development. The sequence is that of Frizzled-10-B (fzd10-b) from Xenopus laevis (African clawed frog).